The following is an 821-amino-acid chain: Maternal DNA replication licensing factor mcm6 (821 aa).

A C4-type zinc finger spans residues 159-186; that stretch reads CMDCQSVVKDVEQQFRYTQPTICKNPVC. The region spanning 347–554 is the MCM domain; the sequence is LYHNLCTSLF…TDYAIARRIV (208 aa). 397–404 contributes to the ATP binding site; that stretch reads GDPSTSKS. The Arginine finger signature appears at 529–532; sequence SRFD.

The protein belongs to the MCM family. As to quaternary structure, component of the mcm2-7 complex (RLF-M). The complex forms a toroidal hexameric ring with the proposed subunit order mcm2-mcm6-mcm4-mcm7-mcm3-mcm5. The heterodimer of mmcm3/mcm5 interacts with mcm4, mmcm6, mcm7 and weakly with mcm2. Component of the CMG helicase complex, composed of the mcm2-7 complex, the GINS complex and cdc45.

Its subcellular location is the nucleus. It localises to the chromosome. The catalysed reaction is ATP + H2O = ADP + phosphate + H(+). Acts as a component of the mcm2-7 complex (mcm complex) which is the putative replicative helicase essential for 'once per cell cycle' DNA replication initiation and elongation in eukaryotic cells. The active ATPase sites in the mcm2-7 ring are formed through the interaction surfaces of two neighboring subunits such that a critical structure of a conserved arginine finger motif is provided in trans relative to the ATP-binding site of the Walker A box of the adjacent subunit. The six ATPase active sites, however, are likely to contribute differentially to the complex helicase activity. The existence of maternal and zygotic forms of mcm3 and mcm6 suggests that specific forms of mcm2-7 complexes may be used during different stages of development. This is Maternal DNA replication licensing factor mcm6 from Xenopus tropicalis (Western clawed frog).